Reading from the N-terminus, the 163-residue chain is Retinoic acid receptor responder protein 2 (163 aa).

Positions 1–20 are cleaved as a signal peptide; that stretch reads MRRLLIPLALWLGAVGVGVA. 3 cysteine pairs are disulfide-bonded: Cys-77–Cys-87, Cys-98–Cys-117, and Cys-101–Cys-135. Positions 158–163 are excised as a propeptide; sequence KALPRS.

Secreted in an inactive precursor form, prochemerin, which is proteolytically processed by a variety of extracellular proteases to generate forms with differing levels of bioactivity. For example, the removal of six amino acids results in chemerin-157, which exhibits the highest activity, while removal of seven amino acids results in chemerin-156 which has slightly less activity. Some proteases are able to cleave at more than one site and chemerin forms may be sequentially processed by different enzymes to modulate activity levels. The coordinated expression and activity of chemerin-modifying enzymes is essential for regulating its bioactivation, inactivation and, consequently, biological function. Cathepsin G cleaves seven C-terminal amino acids from prochemerin (chemerin-156), elastase is able to cleave six (chemerin-157), eight (chemerin-155) or eleven (chemerin-152), plasmin cleaves five amino acids (chemerin-158), and tryptase cleaves five (chemerin-158) or eight (chemerin-155). Multiple cleavages might be required to fully activate chemerin, with an initial tryptase cleavage resulting in chemerin with low activity (chemerin-158), and a second cleavage by carboxypeptidase N or B producing highly active chemerin (chemerin-157). As to expression, expressed at the highest levels in placenta, liver, and white adipose tissue (WAT), and to a lesser extent in many other tissues such as lung, brown adipose tissue, heart, ovary, kidney, skeletal muscle and pancreas. Within WAT, expression is enriched in adipocytes as compared to the stromal vascular fraction. Expression and secretion increases dramatically with adipogenesis. Highly expressed in skin (basal and suprabasal layers of the epidermis, hair follicles and endothelial cells). Expression is elevated in numerous metabolic and inflammatory diseases including psoriasis, obesity, type 2 diabetes, metabolic syndrome and cardiovascular disease.

The protein resides in the secreted. Adipocyte-secreted protein (adipokine) that regulates adipogenesis, metabolism and inflammation through activation of the chemokine-like receptor 1 (CMKLR1). Also acts as a ligand for CMKLR2. Can also bind to C-C chemokine receptor-like 2 (CCRL2), but with a lower affinity than it does to CMKLR1 or CMKLR2. Positively regulates adipocyte differentiation, modulates the expression of adipocyte genes involved in lipid and glucose metabolism and might play a role in angiogenesis, a process essential for the expansion of white adipose tissue. Also acts as a pro-inflammatory adipokine, causing an increase in secretion of pro-inflammatory and prodiabetic adipokines, which further impair adipose tissue metabolic function and have negative systemic effects including impaired insulin sensitivity, altered glucose and lipid metabolism, and a decrease in vascular function in other tissues. Can have both pro- and anti-inflammatory properties depending on the modality of enzymatic cleavage by different classes of proteases. Acts as a chemotactic factor for leukocyte populations expressing CMKLR1, particularly immature plasmacytoid dendritic cells, but also immature myeloid DCs, macrophages and natural killer cells. Exerts an anti-inflammatory role by preventing TNF/TNFA-induced VCAM1 expression and monocytes adhesion in vascular endothelial cells. The effect is mediated via inhibiting activation of NF-kappa-B and CRK/p38 through stimulation of AKT1/NOS3 signaling and nitric oxide production. Its dual role in inflammation and metabolism might provide a link between chronic inflammation and obesity, as well as obesity-related disorders such as type 2 diabetes and cardiovascular disease. Exhibits an antimicrobial function in the skin. This Homo sapiens (Human) protein is Retinoic acid receptor responder protein 2 (RARRES2).